We begin with the raw amino-acid sequence, 157 residues long: Protein Smg homolog (157 aa).

Belongs to the Smg family.

The sequence is that of Protein Smg homolog from Aliivibrio fischeri (strain ATCC 700601 / ES114) (Vibrio fischeri).